Here is a 1960-residue protein sequence, read N- to C-terminus: Myosin-9 (1960 aa).

At Ala2 the chain carries N-acetylalanine. A mediates interaction with LIMCH1 region spans residues 2-838; it reads AQQAADKYLY…RLFTKVKPLL (837 aa). The residue at position 8 (Lys8) is an N6-acetyllysine. Tyr11 is subject to Phosphotyrosine. One can recognise a Myosin N-terminal SH3-like domain in the interval 27-77; that stretch reads AAKKLVWVPSSKNGFEPASLKEEVGEEAIVELVENGKKVKVNKDDIQKMNP. The Myosin motor domain occupies 81 to 776; sequence SKVEDMAELT…VLAHLEEERD (696 aa). N6-acetyllysine is present on Lys102. ATP is bound at residue 174 to 181; it reads GESGAGKT. N6-acetyllysine is present on residues Lys299, Lys435, and Lys613. Ser628 is subject to Phosphoserine. Residues 654–676 form an actin-binding region; sequence LAKLMATLRNTNPNFVRCIIPNH. Residue Tyr754 is modified to Phosphotyrosine. In terms of domain architecture, IQ spans 779 to 808; that stretch reads ITDVIIGFQACCRGYLARKAFAKRQQQLTA. Positions 841-1926 form a coiled coil; it reads IRHEDELLAK…LKNKLRRGDL (1086 aa). Position 850 is an N6-succinyllysine (Lys850). Residues Lys860, Lys975, and Lys1024 each carry the N6-acetyllysine modification. A compositionally biased stretch (basic and acidic residues) spans 1035-1055; it reads RLRREEKQRQELEKTRRKLEG. Residues 1035–1057 are disordered; that stretch reads RLRREEKQRQELEKTRRKLEGDS. Position 1114 is a phosphoserine (Ser1114). The disordered stretch occupies residues 1117-1167; it reads QEDLESERASRNKAEKQKRDLGEELEALKTELEDTLDSTAAQQELRSKREQ. Over residues 1122 to 1148 the composition is skewed to basic and acidic residues; the sequence is SERASRNKAEKQKRDLGEELEALKTEL. 2 positions are modified to N6-acetyllysine: Lys1234 and Lys1249. A disordered region spans residues 1327-1352; it reads LSTKLKQMEDEKNSFREQLEEEEEAK. The span at 1332–1352 shows a compositional bias: basic and acidic residues; it reads KQMEDEKNSFREQLEEEEEAK. N6-acetyllysine is present on residues Lys1357, Lys1392, Lys1404, Lys1410, Lys1459, and Lys1638. The residue at position 1669 (Lys1669) is an N6-succinyllysine. A Phosphoserine modification is found at Ser1714. The tract at residues 1768 to 1788 is disordered; the sequence is LERSHAQKNENARQQLERQNK. N6-acetyllysine is present on residues Lys1793, Lys1802, and Lys1845. Residues 1877 to 1908 form a disordered region; that stretch reads RQLEEAEEEAQRANASRRKLQRELEDATETAD. Arg1923 bears the Omega-N-methylarginine mark. Thr1939 carries the phosphothreonine modification. The tract at residues 1939 to 1960 is disordered; it reads TGDCSDEEVDGKADGADAKAAE. Ser1943 carries the phosphoserine modification. Over residues 1948 to 1960 the composition is skewed to basic and acidic residues; sequence DGKADGADAKAAE.

The protein belongs to the TRAFAC class myosin-kinesin ATPase superfamily. Myosin family. As to quaternary structure, myosin is a hexameric protein that consists of 2 heavy chain subunits (MHC), 2 alkali light chain subunits (MLC) and 2 regulatory light chain subunits (MLC-2). Interacts with RASIP1. Interacts with DDR1. Interacts with PDLIM2. Interacts with SVIL. Interacts with HTRA3. Interacts with Myo7a. Interacts with CFAP95. Interacts with LIMCH1; independently of the integration of MYH9 into the myosin complex. Interacts with RAB3A. Interacts with ZBED4. Interacts with S100A4; this interaction increases cell motility. Post-translationally, ISGylated. In terms of processing, ubiquitination.

The protein localises to the cytoplasm. It localises to the cytoskeleton. Its subcellular location is the cell cortex. It is found in the cytoplasmic vesicle. The protein resides in the secretory vesicle. The protein localises to the cortical granule. In terms of biological role, cellular myosin that appears to play a role in cytokinesis, cell shape, and specialized functions such as secretion and capping. Required for cortical actin clearance prior to oocyte exocytosis. Promotes cell motility in conjunction with S100A4. During cell spreading, plays an important role in cytoskeleton reorganization, focal contact formation (in the margins but not the central part of spreading cells), and lamellipodial retraction; this function is mechanically antagonized by MYH10. In Mus musculus (Mouse), this protein is Myosin-9 (Myh9).